Here is a 289-residue protein sequence, read N- to C-terminus: Stress response regulator protein 1 (289 aa).

The segment at Leu77 to Phe136 is disordered. Over residues Glu83–Asn98 the composition is skewed to acidic residues. Polar residues predominate over residues Pro127–Phe136. The Response regulatory domain occupies Asn163–Glu281. The residue at position 214 (Asp214) is a 4-aspartylphosphate.

Its function is as follows. Required for stress adaptation, morphogenesis and virulence. This chain is Stress response regulator protein 1 (SRR1), found in Scheffersomyces stipitis (strain ATCC 58785 / CBS 6054 / NBRC 10063 / NRRL Y-11545) (Yeast).